Consider the following 255-residue polypeptide: F-box/SPRY domain-containing protein 1 (255 aa).

Positions 3–51 constitute an F-box domain; the sequence is DPVAALCNFNVLEVIFSYLDLNDLSRCSQVCRSWHHFLNDENSDVWRWH. A B30.2/SPRY domain is found at 61–253; it reads MKSDLLTSVS…VSMVYLGTPL (193 aa).

The protein belongs to the FBXO45/Fsn family. As to quaternary structure, component of an E3 ubiquitin ligase complex composed of hiw and Fsn.

The protein resides in the synapse. It functions in the pathway protein modification; protein ubiquitination. Functionally, required in the presynaptic motoneuron to down-regulate the levels of wnd and restrain synaptic terminal growth at the neuromuscular junction (NMJ). In Drosophila willistoni (Fruit fly), this protein is F-box/SPRY domain-containing protein 1.